We begin with the raw amino-acid sequence, 375 residues long: Queuine tRNA-ribosyltransferase (375 aa).

Aspartate 89 functions as the Proton acceptor in the catalytic mechanism. Residues 89–93 (DSGGF), aspartate 143, glutamine 187, and glycine 214 each bind substrate. Residues 245–251 (GVGKPED) are RNA binding. Aspartate 264 acts as the Nucleophile in catalysis. The tract at residues 269–273 (TRNAR) is RNA binding; important for wobble base 34 recognition. Zn(2+) contacts are provided by cysteine 302, cysteine 304, cysteine 307, and histidine 333.

It belongs to the queuine tRNA-ribosyltransferase family. Homodimer. Within each dimer, one monomer is responsible for RNA recognition and catalysis, while the other monomer binds to the replacement base PreQ1. Zn(2+) serves as cofactor.

It catalyses the reaction 7-aminomethyl-7-carbaguanine + guanosine(34) in tRNA = 7-aminomethyl-7-carbaguanosine(34) in tRNA + guanine. The protein operates within tRNA modification; tRNA-queuosine biosynthesis. Its function is as follows. Catalyzes the base-exchange of a guanine (G) residue with the queuine precursor 7-aminomethyl-7-deazaguanine (PreQ1) at position 34 (anticodon wobble position) in tRNAs with GU(N) anticodons (tRNA-Asp, -Asn, -His and -Tyr). Catalysis occurs through a double-displacement mechanism. The nucleophile active site attacks the C1' of nucleotide 34 to detach the guanine base from the RNA, forming a covalent enzyme-RNA intermediate. The proton acceptor active site deprotonates the incoming PreQ1, allowing a nucleophilic attack on the C1' of the ribose to form the product. After dissociation, two additional enzymatic reactions on the tRNA convert PreQ1 to queuine (Q), resulting in the hypermodified nucleoside queuosine (7-(((4,5-cis-dihydroxy-2-cyclopenten-1-yl)amino)methyl)-7-deazaguanosine). The chain is Queuine tRNA-ribosyltransferase from Enterobacter sp. (strain 638).